The following is a 110-amino-acid chain: Defensin-like protein 296 (110 aa).

The N-terminal stretch at 1 to 28 (MASKITIFFVLALVVVCTMMVCIPTATA) is a signal peptide. 6 disulfide bridges follow: Cys-34/Cys-52, Cys-40/Cys-57, Cys-45/Cys-59, Cys-81/Cys-102, Cys-87/Cys-107, and Cys-95/Cys-109.

Belongs to the DEFL family.

The protein localises to the secreted. In Arabidopsis thaliana (Mouse-ear cress), this protein is Defensin-like protein 296.